The sequence spans 676 residues: MEKNLPDIFFFPNCVNVFSYKYSQDEFSNMSKTERDSFSLAVFPVIKHRWHNAHVVKHKGIYKVSTEARGKKVSPPSLGKPAHINLTAKQYIYSEHTISFECYSFLKCITNTEINSFDEYILRGLLEAGNSLQIFSNSVGKRTDTIGVLGNKYPFSKIPLASLTPKAQREIFSAWISHRPVVLTGGTGVGKTSQVPKLLLWFNYLFGGFSTLDKITDFHERPVILSLPRIALVRLHSNTILKSLGFKVLDGSPISLRYGSIPEELINKQPKKYGIVFSTHKLSLTKLFSYGTLIIDEVHEHDQIGDIIIAVARKHHTKIDSMFLMTATLEDDRERLKVFLPNPAFIHIPGDTLFKISEVFIHNKINPSSRMAYIEEEKRNLVTAIQMYTPPDGSSGIVFVASVAQCHEYKSYLEKRLPYDMYIIHGKVLDIDEILEKVYSSPNVSIIISTPYLESSVTIRNVTHIYDMGRVFVPAPFGGSQEFISKSMRDQRKGRVGRVNPGTYVYFYDLSYMKSIQRIDSEFLHNYILYANKFNLTLPEDLFIIPTNLDILWRTKEYIDSFDISTETWNKLLSNYYMKMIEYAKLYVLSPILAEELDNFERTGELTSIVQEAILSLNLRIKILNFKHKDDDTYIHFCKILFGVYNGTNATIYYHRPLTGYMNMISDTIFVPVDNN.

One can recognise a Helicase ATP-binding domain in the interval 172–347; that stretch reads FSAWISHRPV…VFLPNPAFIH (176 aa). 185–192 serves as a coordination point for ATP; sequence GGTGVGKT. The short motif at 296 to 299 is the DEXH box element; sequence DEVH. A Helicase C-terminal domain is found at 366 to 535; the sequence is NPSSRMAYIE…NYILYANKFN (170 aa).

It belongs to the DEAD box helicase family. DEAH subfamily. Monomer.

The protein localises to the virion. It catalyses the reaction ATP + H2O = ADP + phosphate + H(+). In terms of biological role, NTP-dependent helicase that catalyzes unidirectional unwinding of 3'tailed duplex RNAs and plays an important role during transcription of early mRNAs, presumably by preventing R-loop formation behind the elongating RNA polymerase. Might also play a role in the export of newly synthesized mRNA chains out of the core into the cytoplasm. Required for replication and propagation of viral particles. The chain is RNA helicase NPH-II (OPG084) from Vaccinia virus (strain Ankara) (VACV).